The sequence spans 424 residues: MAKNIQAIRGMNDYLPEETAFWQCVEGTLKNVLASYGYSEIRLPIVEQTPLFQRAIGEVTDVVEKEMYTFADRNGDSLTLRPEGTAGCVRAGIEHGLLYNQEQRLWYVGPMFRYERPQKGRYRQFHQMGAEVFGQQGPDVDAELILLTARWWRALGIQEHVALELNSIGSLEACARYREALVAFLRQHEDRLDEDCRRRMHTNPMRVLDTKNPDIQVLLNDAPVLTDYLDDDSQAHFSGLCELLDLAGIPYTVNPRLVRGLDYYNRTVFEWVTTRLGSQGTVCGGGRYDGLVEQLGGRATPAVGFAMGLERLVLLVQAVNPDFAAAARVDAYLVAAGDGVQREALRLAEQLRDELSSLRLMTNYGGGSFKKQFGRADKHGARIALVLGESEAAAGQVVVKDLATGNQETLAQSDVAARLASILG.

The protein belongs to the class-II aminoacyl-tRNA synthetase family. Homodimer.

The protein localises to the cytoplasm. The catalysed reaction is tRNA(His) + L-histidine + ATP = L-histidyl-tRNA(His) + AMP + diphosphate + H(+). This is Histidine--tRNA ligase from Sodalis glossinidius (strain morsitans).